The chain runs to 287 residues: MTVSDSPAQRQTPPQTPGGTAPRARTAAFFDLDKTIIAKSSTLAFSKPFFAQGLLNRRAVLKSSYAQFIFLLSGADHDQMDRMRTHLTNMCAGWDVAQVRSIVNETLHDIVTPLVFAEAADLIAAHKLCGRDVVVVSASGEEIVGPIARALGATHAMATRMIVEDGKYTGEVAFYCYGEGKAQAIRELAASEGYPLEHCYAYSDSITDLPMLEAVGHASVVNPDRGLRKEASVRGWPVLSFSRPVSLRDRIPAPSAAAIATTAAVGISALAAGAVTYALLRRFAFQP.

The disordered stretch occupies residues 1 to 23; sequence MTVSDSPAQRQTPPQTPGGTAPR. The span at 7–23 shows a compositional bias: low complexity; it reads PAQRQTPPQTPGGTAPR. Asp31, Asp33, and Asp204 together coordinate Mg(2+).

This sequence belongs to the HAD-like hydrolase superfamily. SerB family.

This is an uncharacterized protein from Mycobacterium tuberculosis (strain CDC 1551 / Oshkosh).